A 109-amino-acid polypeptide reads, in one-letter code: UPF0122 protein CLH_1195 (109 aa).

The protein belongs to the UPF0122 family.

Its function is as follows. Might take part in the signal recognition particle (SRP) pathway. This is inferred from the conservation of its genetic proximity to ftsY/ffh. May be a regulatory protein. The sequence is that of UPF0122 protein CLH_1195 from Clostridium botulinum (strain Alaska E43 / Type E3).